Here is a 298-residue protein sequence, read N- to C-terminus: RNA exonuclease 4 (298 aa).

A coiled-coil region spans residues 1-73 (MRKTVRKNKQ…EAKLKLKSAT (73 aa)). The 151-residue stretch at 125-275 (FFSIDCKIIE…RDTIINVILY (151 aa)) folds into the Exonuclease domain.

Belongs to the REXO4 family.

It is found in the nucleus. This chain is RNA exonuclease 4 (rexo4), found in Dictyostelium discoideum (Social amoeba).